The primary structure comprises 355 residues: dTDP-D-glucose 4,6-dehydratase (355 aa).

Residue threonine 142 coordinates substrate. The active-site Proton donor is aspartate 143. Active-site proton acceptor residues include glutamate 144 and tyrosine 166.

Belongs to the NAD(P)-dependent epimerase/dehydratase family. dTDP-glucose dehydratase subfamily. It depends on NAD(+) as a cofactor.

It catalyses the reaction dTDP-alpha-D-glucose = dTDP-4-dehydro-6-deoxy-alpha-D-glucose + H2O. This chain is dTDP-D-glucose 4,6-dehydratase (Tgds), found in Mus musculus (Mouse).